The following is a 121-amino-acid chain: Large ribosomal subunit protein uL14 (121 aa).

This sequence belongs to the universal ribosomal protein uL14 family. As to quaternary structure, part of the 50S ribosomal subunit. Forms a cluster with proteins L3 and L19. In the 70S ribosome, L14 and L19 interact and together make contacts with the 16S rRNA in bridges B5 and B8.

Binds to 23S rRNA. Forms part of two intersubunit bridges in the 70S ribosome. This is Large ribosomal subunit protein uL14 from Legionella pneumophila (strain Corby).